The primary structure comprises 585 residues: A-type ATP synthase subunit A (585 aa).

231-238 serves as a coordination point for ATP; sequence GPFGSGKT.

The protein belongs to the ATPase alpha/beta chains family. As to quaternary structure, has multiple subunits with at least A(3), B(3), C, D, E, F, H, I and proteolipid K(x).

It is found in the cell membrane. The enzyme catalyses ATP + H2O + 4 H(+)(in) = ADP + phosphate + 5 H(+)(out). In terms of biological role, component of the A-type ATP synthase that produces ATP from ADP in the presence of a proton gradient across the membrane. The A chain is the catalytic subunit. The sequence is that of A-type ATP synthase subunit A from Desulfurococcus sp. (strain SY).